We begin with the raw amino-acid sequence, 553 residues long: Telomere repeat-binding protein 2 (553 aa).

Positions 147–170 (SSTEVGACGNGSPNESRDDVNLFS) are disordered. The 80-residue stretch at 285-364 (VKLRIKSFRV…HLDSLGFSLE (80 aa)) folds into the Ubiquitin-like domain. The interval 394-413 (ALDSSHEPEPSPADSFGKLG) is disordered. Residues 448-507 (AQRRIRRPFSVTEVEALVQAVEKLGTGRWRDVKVRAFEDADHRTYVDLKDKWKTLVHTAR) enclose the HTH myb-type domain. The segment at residues 476-503 (WRDVKVRAFEDADHRTYVDLKDKWKTLV) is a DNA-binding region (H-T-H motif).

In terms of assembly, homodimer and heterodimer with TRP1. Interacts with SNL1. Expressed ubiquitously. Highest expression in flowers and leaves.

The protein resides in the nucleus. Its function is as follows. Binds specifically to the plant telomeric double-stranded DNA sequences. At least 2 repeats of telomeric sequences are required for binding. Induces DNA bending. This Arabidopsis thaliana (Mouse-ear cress) protein is Telomere repeat-binding protein 2 (TRP2).